Here is a 193-residue protein sequence, read N- to C-terminus: Protein hunchback (193 aa).

Disordered stretches follow at residues 16–126 and 146–193; these read SHHH…ATTT and SNDK…KYMA. Over residues 17-31 the composition is skewed to basic residues; the sequence is HHHHHHHAHHSHHQH. Composition is skewed to low complexity over residues 35–46 and 56–77; these read SNSNSNASSPHQ and SSNN…QQQQ. Over residues 89 to 99 the composition is skewed to polar residues; sequence PSPSNNDQNSR. Residues 174–193 are compositionally biased toward basic and acidic residues; the sequence is EPEKEHDLMSNSSEDMKYMA.

Belongs to the hunchback C2H2-type zinc-finger protein family.

The protein resides in the nucleus. Gap class segmentation protein that controls development of head structures. This Drosophila iki (Fruit fly) protein is Protein hunchback (hb).